The chain runs to 122 residues: Large ribosomal subunit protein bL12 (122 aa).

It belongs to the bacterial ribosomal protein bL12 family. Homodimer. Part of the ribosomal stalk of the 50S ribosomal subunit. Forms a multimeric L10(L12)X complex, where L10 forms an elongated spine to which 2 to 4 L12 dimers bind in a sequential fashion. Binds GTP-bound translation factors.

Functionally, forms part of the ribosomal stalk which helps the ribosome interact with GTP-bound translation factors. Is thus essential for accurate translation. The polypeptide is Large ribosomal subunit protein bL12 (Streptococcus pneumoniae serotype 19F (strain G54)).